The primary structure comprises 8922 residues: MSSWFSYFGFSKGPPLEEVREESEEDAQVPEQVVSKNTEEEIADAINRLSPEQQNLIQDVLRRAESSRKEAKVVVDAEMMRSRFRQRDSIEDSQEIDHRYSLIQMDSIPENMVTNEMEERLATTQNEDIIPESSQRSPITPRKIHEKRASITEVTTENLRHRFQKMKSHLTTWFNSLDYDGEYIFDFTSKPEKSEKLGELTMQYIDALSQAIMISSHIEYSHHVLSSNPKFQQMCTQFCESIFSVAFDELTYQLLDDKVQETLNEYCGQIAEEALQAAFFTMISKTLSKSKECEQVLNEISSMHKSRSFESAKQLDQLLSRIEDDRESSRKSSPYLYEVLGKSSDSPSTSASVEYRSQNSYESEISFETPDIHVEELFDTHLNEKDETKLILKSVEDKLETTEIEGNVPKIDENLIENIQYDSGDQEHYIWISGPLGRINEEHEDDFEARSESSSGSMITHSTEPKMQLNVEEYIQTMIARVSTENEITNTSNQTANIVIDPGSIDSEEINKLAAKLVEESILKASQEAASDNHEKERSSATSKADYERSFDQDVTYERSSPLLEPSEEPVMESKEPELTQEEIDHIARIQSLAEQSSFEQASTIPDRPPLPARLPTVDEPIVISEQHEEDRSSATSGADYERSFDQEVTYERSSPLLEPCEEPVMESKEPELTQEEIDHIARIQSLAEKSSFEQASTIPDRPPLPARLPTVDEPIVISEQHEEDRSSATSGADYERSFDQDVTYEKSSPLLEPSEDPVMESKEPELTQEEIDHIARIQSLAEKSSFEQTSTIPDRPPLPARLPTVDEPIVSSEQHEEDRSSATSGADYERSFDQDVTYERSSPLLEPCEEPVMESKEPELTQEEIDNIAWIQSIAEQSSFEQASTIPDRPPLPVRLPTVDEPIVSSEQQEEDRSSATSGADYERSFDQDVTYERSSPLLEPSEDPVMESKEPELTQEEIDHIAWIQSIAEQSSFEQASTVPDRPPLPVRLPTVDEPIVSSEQHEDDRSSATSGADYERSFDQDVTYERSSPLLEPCEEPVMESKEPELTQEEIDHIAWIQSSAEQSSFEQASTVPDRPPLPVRLPTVDEPIVSSEQHEEDRSSATSGADYERSFDQDATYERSSPLLEPCEEPVMESRVPELTQEEIDHIARIQSLAEKSSFEQTSTIPDRPPLPARLPTVDEPIVSSEQHEEDRSSATSGADYERSSDQEVTYERSSPLLEPCEEPVMESKEPELTQEEIDHIAWIQSIAEQSSFEQASTVPDRPPLPVRLPTVDEPIVSSEQHEDDRSSATSGADYERSFDQDVTYERSSPLLEPCEEPVMESKEPELTQEEIDHIAWIQSIAEQSSFEQASTVPDRPPLPVRLPTVDEPIVSSEQHEDDRSSATSGDDYERPFDQDFTYERSSPLLEPCEEPVMESRVPELTQEEIDHIAWIQSIAEQSSFEQASTIPDRPPLPVRLPTVDEPIVSSEQHEDDRSSATSGADYERSSDQEVTYERSSPLLEPCEEPVMESKKPELTQEEIDHIAWIQSIAEQSSFEQASTIPDRPPLPVRLPTVDEPIVSSEQHEDDRSSATSGADYERSFDQDVTYERSSPLLEPSEDPVMESKEPELTQEEIDHIAWIQSIAEQSSFEQASTIPDRPPLPVQLPTVDEPIVSSEQQEEDRSSATSGADYERSFDQDVTYERSSPLLEPSEDPVMESKEPELTQEEIDHIAWIQSIAEQSSFEQASKIPDRPPLPVRLPTVDEPIVSSEQHEEDRSSATSGADYERSFDQDVTYERSSPLLEPSEEPVMESRVPELTQEEIDHIAWIQSIAEQSSFEQASTIPDRPPLPVRLPTVDEPIVSSEQHEEDRSSATSGADYERSSDQEVTYERSSPLLEPCEEPVMESKEPELTQEEIDHIAWIQSIAEQSSFEQASTIPDRPPLPVRLPTVDEPIVISEQHEEDRSSATSGADYERSFDQDVTYERSSPLLIPSEDPVMESKESELTQEEIDHIARIQSLAEQSLFEQASTIPDRPPLPVRLPTVDEPIVISEQHEGDRSSATSGADYERSFDQDVMYERSSPLLIPSEDPVMESKESELTQEEIDHIARIQSLAEQSSFEQASTIPDRPPLPVRLPTVDEPIVISEQHEGDRSSATSGADYERSFDQDVTYERSSPLLEPCDEPVMESKEPELTQEEIDHIARIQNLAEQSSFEQASTITDRPPLPVRLPTVDEPIVISEQHEGDRSSATPGADYERSYDQDVTYERSSPLLEPSEVPVMVSKAAVLTQEEIDHIAIMQSLAETEDRKALLEPCEEPVMESKKPELTQEEIDHIAWIQSIAEQSSFEQASTIPDRPPLPVRLPTVDEPIVSSEQHEDDRSSATSGADYERSIDQEVTYERSSPLLEPCEEPVMESKKPELTQEEIDHIAWIQSIAEQSSFEQASTIPDRPPLPVRLPTVDEPIVSSEQHEEDRSSATSGADYERSSDQEVTYDRSSPLLEPCEEPVMESKPELTQEEIDHIAWIQSIAEQSSFEQASTIPDRPPLPVRLPTVDEPIVSSEQHEEDRSSATSGADYERSFDQDVTYERSSPLLEPSEDPVMESKEPELTQEEIDHIAWIQSIAEQSSFEQASTIPDRPPLPVRLPTVDEPIVSSEQHEDDRSSATSGTDYERSFDQDVTYERSSPLLEPCEDPVMESKEPELTQEEIDHIAWIQSIAEQSSFEQASTIPDRPPLPVRLPTVDEPIVSSEQHEDDRSSATSGADYERSFDQDVTYERSSPLLEPSEDPVMESKEPELTQEEIDHIARIQSLAEQSSFEQASTVPDRPPLPVRLPTVDEPIVSSEQHEDDRSSATSGADYERPFDQDFTYERSSPLLEPCEEPVMESKKPELTQEEIDHIAWIQSIAEQSSFEQASTIPDRPPLPVRLPTVDEPIVSSEQHEEDRSSATSGADYERSFDQDVTYERSSPLLEPYEEPVMESKVPELTQEEIDHIARIQSLAEQSSFEQAPTIPDRPPLPVRLPTVDEPIVISEQHEGDRSSATSGADYERSFDQDVTYERSSPLLIPSEDPGNPSEPAPTPEEIHHTACDPSIAAPSSSFEQASTVPDRPPLPVRLPTVDEPIVSSEQHEDDRSSATSGADYERSFDQDVTYERSSPLLEPCEEPVMESKEPELTQEEIDHIAWIQSIAEQSSFEQASTVPDRPPLPVRLPTVDEPIVSSEQHEDDRSSATSGADYERSFDQDVTYERSSPLLEPCEEPVMESKEPELTQEEIDHIAWIQSIAEQSSFEQASTIPDRPPLPVRLPTVDEPIVSSEQHEDDRSSATSGTDYERSFDQDVTYERSSPLLEPSEEPVMLSKEAELTQEEIDHIAIIQSLAEKSSFEQFGIQTGHPFLPVRILTERQNDHDRISEEDNTSSCSSENNIILKYSDISYDRNTPLLNSDDEFLEKDFGASAESSEPSQGNWAKFEEISSSSNAEWPTNISTYKFPSFSEKNVNEDLLNKSSWDCRDNVIVDDVIEEEDENDLLGDVTYSREVNKDYWKDSSTIPLVRIECVSDEQINVNEETPGIDKEIKSAEISKDDNSVVSCSSENQIDHTNDEHFDFGQEDSEHEELKHCSSQYSFDSSLPPFHRYVACPSITPSEGDDGGSSETGHPTTDECYNEDVNRQIEQYSALASLSKSVLPVVEIKIDEATSESSVLQLDDDDKSISEQEDFIDNMDLTLKRNEDKTNITNLGASEIQQQEENEISAQTAEVESSDSWNSKTVKMLSDDSAFAEETQHVDLVSTSATKHEDYAEEQTLSQEEIDHIARITAMATEDNTDLQTLPTPQVRQNEPELSQKEIDHITRIAAMANKDFGMYPSIVSEHPAPVESELTQEELDHIARITEIASMDISTLPPPTGKPSETSLTQEELDHIARIAEMASAEYDVPVKIFEPPELTQEELDHIAKITAMAAQDVQLPATQRSITHKVSLTPPPPPPSKHFEQDLTQEELDHIARIAEMADMDYNTPFTAEPVQDEEEEPITESGSDATSGADIFDEQEDASSDREKRSGTSFPDNAETSLEDDTAHEKSYPQLEPSEEPVMKSKEPELTQEEIDHFARIQSLAEQSSFEQASTIPDRQPLPVRLPTVDEPIVISEQHEGDRSSATSGADYERSFDQDVTYERSSPLLEPCDEPVMESKEPELTQEEIDHIARIQSLAEQSSFEQTSTIPDRQPLPVRHPTVDEPIVISGQHEEDRSSATSGADYQQSFDQDDPSKRSSPLLEPNEEQMMESTQPELTQDHSSTTISDILIKEVDKFIPEAKFGRSFEEHDGRLIHSGNLDIDVPLESDCRKTFGQDKSESTMPTELTEADLERVARIHQHFDQSSFDEVVVPTSHPDDGRSSSVRSSEYLDTVTPLSSCAATPILTNPKLVQEELDHIAFIQKMAEQFTFDEVETPILRQNTTSHSVSYNFVQRSCHEDVSFQKKESPALTSLKEIAESSQLTQEELDHIASIQQMADQPYFEESHFIFKSDVKEEKKEDKLHHELFVEECVAQESITQDDVERKPLELTQEEIDHIAKIQKLADQSSFEQASAIQSLPTAEEPIVEKREDDKSNITSGADYQQSFDQDVTYKRSSPLLEPSEEPVMESKEPELTQEEIDHIARIQSLAEQSSFEQASTIPDRPPLPVRLPTVDEPIVISEQHEGDISSATSGADYERSLDQDVTYERSSPLLEPCDEPVMESKEPELTQEEIDHIARIQSLAEQSSFEQASTIPDRPPLPVRLPTVDEPIVSSEQHEEDRSSATSGADIERSFDIDVSQDRVSPISEHEEGVTQEEMEHIARIAAMAAEDFKHPEGNLEPEFSQPDKDHIAMMKKLEEQSKMENQELPANPIIHTDQVDRQESEGSSSATSGADIPSSFDISSPIPPEPLQDHITTSQKLISRPSIEISNVPSRLPELSLTAVQRGSEDISSATSGAGIERSFDGISPLPNFSEEPIMINDEMNYVLMVTHMAQKIDVQQPIQETSTLRKAVLCESPEDFSEATSGADTESISETTANKKDSNDSNGLTEEEMKHIAEVLRKAEASSAASGMFERDSNLPPLRRTSITYTSHFSPSVIRDLRSSTSFTSVPAASDEEEIVKGKLKREPSTQVVYTDHFLRDLQSINAYLEKGEDGTDVTIEETSHDNESSSLPEEDEHITDVYHFDVGTSLLVQQYILQQSTFQEAAGLHISPIRRTMSAACTAEKHIDDEENIKEREVKHAQSHDQIKKRAGGEPNAYELLEQHSFRHTQPLLCNVDFLWRLNFAANRMTEEIADEAGRELRAHYRNVANPRARYFSDAYDIGTDDEEEEVTETSQAGFSVEPMRHEEQSYGLFSFFTSSKRSVSDRPRSALAMFTNPSPSASPSLLRKESEDRGDILNLLRRSSGADSRASNDSSASRLPDTALVGLSEAEKQHIMSVMSRSNRNTSPMTSRRCSSALQMLPEVDNLSEAEKEHIQTILEKAESKTPFMIKVPMKKQISSRTESTNSRVSSEGIDEEVENEVQRKKTIEEPIVEIPSRAVTPRNNLRVIPPPIAISHPTPPHSAKTDTGSRHSSGSSAHSQFGFSTPSISGFKIFFDKAKTATETLVKEIKDEVIVEVDKDKTETKPEPNVSNELTAEEFEHIRRINEMAGIDEPIQPPPIAQERRKSSVVSGLKNMFGVGKHDESELTTEEKEHIRQMSLMAEKMDEEILDEQSKPKSTFGLKNFFGKATQSVMHATDSVIKNVQNQSKQSLSGLTQEELDNIAQATESAQQESKQELTQDEIDHIARINAMAAEDFEQPAVNMNQGLSQAEKDHIARIEAMAADDSQSKIIVPPPSIIQKDIELSMEEMDHIARIAAMADEDFTHPVKGAVAPIYDENYSRDDGAIDRFPASTATPVFAQPSEIELSEEEREHISRIAAMAEEDFNTPYVSTHPTQQIEIELTEEEKEHIARIEAMASEDLNAPSPFIQQEQRVATMPVPINYHVEEPTLSQEEIDHIARITAMATEDNTDLQTLPTPQVKQNEPELSQEEIDHITRIAAMANEDFGMYPSIVSEHPAPVESELTQEELDHIAKITGMASMDISTLPPPTGKPSETSLTQEELDHIARIAEMASAEYDVPVKIFEPPELTQEELDHIAKITAMAAQDVQLPATQRSITHKVSLTPPPPPPSKHFEQDLTQEELDHIARIAEMADMDYNTPFTAEPVQDEEEEPITESGSDATSGADIFDEQEDASSGASGSFDNNNAQVLTSGFSPDRVTSPAALDTTEEPQGPIMAQKTVSPTPSADSMASRKSSEYDIRSISEIRQESESDIGKWYEEQLSFMRQSIHDEEEDVGHEIRTDVEEFPLEYVEDQLHFLEGIDVESQHHEPTTSSAFFGTGRSIGEGEKRKYGDDAVEQQKLENYEEEEKTKSSSREAFDDGFETQREESLRAQQTPIDSLPGSRMLKRPNFGFLSNIANDAINKAKEAGSQIQAAVPIKPSSSSSNIVNNNVFSSSKSSTSLGTSAPTKSIPSPQIGIPMDGLSEEERRQIMSVMAAADFDDSVNNVKPSTSGSSNIPAGMEDLSEAEREKIMSVMANAEMEMGARFPPPSSQIPTRSPSVMSSSIMSELPPGLDDLSDDERMKIMAVMAEADMQNVRKPIARGPPPMPPSTSMIPPGMEGLSEEERQKIMSVMANAETDSSSSVITSRQPSRSPSVARMQPQLMPPQQAIPIIPPGLEGLSDEERHTIMSVMAEAEFEESRSQVPSRQPSRSPSFVNPQQSFHPIPSFEPIVPPGLEDLSEEERQKIMSVMMNAEVEESRSQLPSRQPSRSPSVAMIQAPAVPIIPSGMEDLPEAERQKIMSVMAEAEIQNFVPSRSPSNYSMQPVPVIPHGLEDLSEAERQKILSVMAEAEIDSAKIPSRSTSSYSMPPPLPQMSQPEITTGLEHSSEADMEFGRDSSRSHQVIPPGLENLSEEERQQIMSVMAHAELESIIPSGHIDQPISLPRGHTGFKPAGIVNEDELFETERKQREESPTRESGYATSTSYERELAMGDEERMDGLLEDIIRIREGARSRRDSRDEVLHRREEDPEVHTPEESSTAVVTDVPSVSPVTENVPEKQTDDFDFTYSDSRFAEIVQMQEEEEAGSLQKQKVDEKPRMWETVFDGDESELPHQDFVFNEPTTKKTSDFDFPKETDEVFEKPSEIQRIRVTKNHDVDMDEIYDNVIATEAPSSVSQRRQPVDSETSVKSRTIQRGPTKPPPMIKITVEEETKSDSDEESCSEDDEEYPDRVVAAPTAPAPTFEEVENERIRQEELGKEVLQQIMAFGEVANDEFDVQWAKTTTSQTPSTSTKPTVTAPKRSDPIPIAPSQRSKEIEEERIRTEALEEEEFYRHGHNPFLESPEEDEVSINMEDVEYAEIARLYESANQTMRRPGPVYTITEDESEDDGTLSNSESRLVAREKRLMDKKTADSLMAKYQKMKKVQAKQTTTASSTSVTATPAYAIINFSDLKTSTRTTDSNSYFETTKNIPALEIKDPKKDIPPEISASIDKTMAEVDALLGQVYTNEKAIPNLLCFDQSNFSNHPPTSSASTSTADDLILLKNNNSSSPSFLLPLQSSVLGSQLDSVRDDNERNENETTSPRGLKRSPGMLLPSPTSTSIFPMPPTAAESVGAAIGATTASMFGGISVADPPPTMDGLTNSYKWLQNIEDDGNLANNDMGRRKLPSIPPNSSAFPPPTSVTTNVISTDTSMPSTSSGPAPTYVDDYNVTLPSDPIVAESLLKGGSLTRRHQHQQQHQAPVYITSSASRPPSAAGSNIFQESRPTSSLSMYQNDVILSRPGSAASNYTTASTINPTILAGASYSSKASSHIRQPVSVRSPRAQTGTTQTTAASGSASNSIRPSIGSSSVTTRVPNTLARVLLKKELKDVLIQRKQRLEATEIEANQRHYKVQKMLITGLLPEKPEDDIPNIVKCDLPADLVRGVHISMQPPSPAVSAFSPRRYHHPTSVASHQSHPSTFKHMSKSIACQADELPPVKPMISLRTQLDMERRPQLMTYVGKRSAETQTELANYESITPTVRYGSIPRSSRERTASRRYREQQQQIYNQMPQNHNDLLEITKKYFEDYDRQLREFGERARRHSRRRFDFHDDDDQDDMRKNQVMHELARRKERMCASCEILSTTDPIRTALNPNVPMSSDYSSHVPHYGSLPRIDYPRGTRSDVRDFTYRQQHLPQQPPTNYSYNYGSLPRNFERGFSDLPPIEIENEQSFGAPPRHRSNLGYESTSMFNLSDPVYLGYDSIPMVQHQQPRVYDQIPSGYAQDTTNLNSLNQGVRGSDMVSQYASYLNSQFQSGLQQSAQLPQPMIPITRYDAPMSDPYVSSRSRLVDQMNQGYNSNQYHHHSTLLAPKSAQMTHIAPTYNQLAQQQGIPMQNTQMDPLMMSSGRIPSSSSQVYSRNEMNYGSRPAQSSLFEYGNRRQYGAAPPPTYDVPNVSSASDWRTTQQQGLIQQMPMQMQQQQHNTFDARWPKEDALSRMYATASRRRAQETALTSSNKISTGSRSYARRPIRPSSYRNPEATNSMPDRHVARRTAENSRYDVKRILLTRSYKHHNIYNDLGVRVVGGKRQMNGELSAYVSQLHSTANNQTLGQIKIGDEVVEWNGILLRGKTFEEVERIVNKSHGEIEMVIRTYKNPSSGVYDTLPLNRNTMRDDLSPDRVPPVPMHRINGINNNSVLHHHTLSDSSCHGHIQVSLGYDGNSRLVAKIIRARGLKSRDQSRSAPNPFVKVYLLPGRKVSHKRRTRFVDSSCAPEWNQVLEYQVAPHTLNTMFLEFTVCDYQRDVDDLPLGNVQIPLADKSAINTGPRWYPLQGSYDQPIPQHYMNGTSLSQIPSIAAASKHSAAVHNHHNHNYSEVPPSILYPKGGVGTRHPDKPVRHATFNYNPVSLDIGYPAIN.

Positions 11 to 35 (SKGPPLEEVREESEEDAQVPEQVVS) are disordered. The segment covering 19-28 (VREESEEDAQ) has biased composition (acidic residues). Residues 385 to 405 (KDETKLILKSVEDKLETTEIE) adopt a coiled-coil conformation. Disordered regions lie at residues 527–579 (QEAA…EPEL), 622–673 (IVIS…EPEL), 687–860 (LAEK…KEPE), 880–955 (SFEQ…EPEL), 971–1049 (EQSS…EPEL), 1062–1139 (SSAE…MESR), 1151–1331 (IARI…EPEL), 1347–1420 (EQSS…VMES), 1444–1520 (SFEQ…PELT), 1538–1619 (SFEQ…EEID), 1632–1710 (SFEQ…LTQE), 1726–1801 (SFEQ…VPEL), 1820–1898 (SFEQ…LTQE), 1939–1992 (VISE…LTQE), 2032–2084 (IVIS…SELT), 2126–2175 (IVIS…SKEP), 2194–2213 (QSSF…PVRL), 2220–2246 (IVIS…YDQD), 2329–2403 (SFEQ…KKPE), 2423–2497 (SFEQ…KPEL), 2516–2594 (SFEQ…LTQE), 2610–2684 (SFEQ…KEPE), 2704–2845 (SFEQ…ERPF), 2892–2963 (SFEQ…MESK), 2983–3155 (EQSS…EPEL), 3171–3249 (EQSS…EPEL), 3268–3337 (SFEQ…PVML), 3619–3639 (SITP…PTTD), 3995–4079 (AEPV…QEEI), 4117–4169 (IVIS…PELT), 4181–4271 (SLAE…STTI), 4557–4624 (QASA…TQEE), 4636–4656 (EQSS…PVRL), 4666–4685 (SEQH…YERS), 4730–4801 (EQSS…GVTQ), 4855–4899 (PANP…PLQD), 5004–5036 (PEDF…NGLT), 5360–5379 (LAMF…RKES), 5390–5413 (RRSS…DTAL), 5484–5511 (KKQI…ENEV), 5540–5572 (PPIA…SQFG), 6194–6303 (AEPV…ESES), 6354–6437 (DVES…GSRM), 6487–6510 (SSKS…QIGI), 6577–6609 (ARFP…LDDL), 6668–6691 (NAET…SVAR), 6728–6768 (AEFE…VPPG), 6998–7018 (TERK…TSTS), 7045–7098 (ARSR…DDFD), 7137–7175 (FDGD…FEKP), 7202–7263 (EAPS…YPDR), 7313–7350 (KTTT…EIEE), 7598–7623 (DSVR…SPGM), 7760–7797 (TRRH…SRPT), and 7842–7881 (HIRQ…SSSV). A compositionally biased stretch (basic and acidic residues) spans 531–552 (SDNHEKERSSATSKADYERSFD). Positions 760–776 (MESKEPELTQEEIDHIA) are enriched in basic and acidic residues. Residues 1062-1076 (SSAEQSSFEQASTVP) are compositionally biased toward low complexity. A compositionally biased stretch (basic and acidic residues) spans 1230 to 1244 (MESKEPELTQEEIDH). Residues 1251 to 1261 (IAEQSSFEQAS) show a composition bias toward polar residues. Basic and acidic residues-rich tracts occupy residues 1606–1619 (MESK…EEID) and 1700–1710 (MESKEPELTQE). 2 stretches are compositionally biased toward basic and acidic residues: residues 1888-1898 (MESKEPELTQE) and 1982-1992 (MESKESELTQE). Polar residues predominate over residues 2194–2204 (QSSFEQASTIT). Basic and acidic residues predominate over residues 2584–2594 (MESKEPELTQE). Residues 2772 to 2788 (MESKEPELTQEEIDHIA) show a composition bias toward basic and acidic residues. Over residues 2793–2803 (LAEQSSFEQAS) the composition is skewed to polar residues. Polar residues predominate over residues 3076–3085 (APSSSFEQAS). A compositionally biased stretch (polar residues) spans 4035 to 4044 (GTSFPDNAET). The span at 4065-4079 (PVMKSKEPELTQEEI) shows a compositional bias: basic and acidic residues. Composition is skewed to polar residues over residues 4182-4195 (LAEQ…STIP), 4223-4234 (SATSGADYQQSF), and 4255-4271 (MEST…STTI). The span at 4571 to 4580 (IVEKREDDKS) shows a compositional bias: basic and acidic residues. Over residues 4581 to 4594 (NITSGADYQQSFDQ) the composition is skewed to polar residues. Basic and acidic residues predominate over residues 4613–4624 (MESKEPELTQEE). The span at 4636–4645 (EQSSFEQAST) shows a compositional bias: polar residues. Residues 4730–4739 (EQSSFEQAST) are compositionally biased toward polar residues. The segment covering 4871-4890 (EGSSSATSGADIPSSFDISS) has biased composition (low complexity). Over residues 5009-5023 (EATSGADTESISETT) the composition is skewed to polar residues. Low complexity predominate over residues 5390–5407 (RRSSGADSRASNDSSASR). Over residues 5486–5499 (QISSRTESTNSRVS) the composition is skewed to polar residues. Pro residues predominate over residues 5540-5550 (PPIAISHPTPP). A compositionally biased stretch (low complexity) spans 5560 to 5572 (RHSSGSSAHSQFG). Polar residues-rich tracts occupy residues 6225 to 6245 (ASSG…TSGF) and 6270 to 6284 (KTVS…MASR). Basic and acidic residues-rich tracts occupy residues 6285–6303 (KSSE…ESES) and 6376–6422 (GEGE…EESL). The segment covering 6494–6505 (LGTSAPTKSIPS) has biased composition (polar residues). Positions 6590 to 6600 (SPSVMSSSIMS) are enriched in low complexity. The segment covering 6670-6687 (ETDSSSSVITSRQPSRSP) has biased composition (polar residues). Residues 6735 to 6747 (SQVPSRQPSRSPS) show a composition bias toward low complexity. Basic and acidic residues-rich tracts occupy residues 6998-7008 (TERKQREESPT) and 7045-7069 (ARSR…HTPE). The span at 7071-7086 (SSTAVVTDVPSVSPVT) shows a compositional bias: low complexity. A compositionally biased stretch (basic and acidic residues) spans 7155 to 7175 (TTKKTSDFDFPKETDEVFEKP). Positions 7248–7260 (SDEESCSEDDEEY) are enriched in acidic residues. A compositionally biased stretch (low complexity) spans 7313–7331 (KTTTSQTPSTSTKPTVTAP). A compositionally biased stretch (basic and acidic residues) spans 7599 to 7609 (SVRDDNERNEN). 2 stretches are compositionally biased toward low complexity: residues 7777 to 7788 (SSASRPPSAAGS) and 7854 to 7880 (AQTG…GSSS). Residues 7895 to 7915 (KKELKDVLIQRKQRLEATEIE) are a coiled coil. Residues 8510-8562 (SRRRAQETALTSSNKISTGSRSYARRPIRPSSYRNPEATNSMPDRHVARRTAE) form a disordered region. Composition is skewed to polar residues over residues 8517 to 8530 (TALT…TGSR) and 8541 to 8551 (SYRNPEATNSM). Basic and acidic residues predominate over residues 8552 to 8562 (PDRHVARRTAE). A PDZ domain is found at 8570–8661 (RILLTRSYKH…EIEMVIRTYK (92 aa)). Residues 8714–8835 (CHGHIQVSLG…SAINTGPRWY (122 aa)) form the C2 domain.

As to expression, expressed in the nervous system.

Its subcellular location is the synapse. It is found in the cell projection. It localises to the axon. Required for synapse development in the active zone of presynaptic terminals of specific neurons including serotonergic NSM neurons. The active zone is a protein-dense neuronal region within the presynaptic bouton, from which synaptic vesicles send neurotransmitter signals across the synapse. Plays a role in the recruitment and clustering of synaptic vesicles in the active zone of presynaptic terminals in serotonergic NSM neurons, and coordinates the release of synaptic vesicles at presynaptic terminals to regulate neurotransmission at neuromuscular junctions. Regulates synapse number in inhibitory motor neurons and plays a role in spontaneous postsynaptic synaptic vesicle release in muscle cells. The chain is Protein clarinet from Caenorhabditis elegans.